Reading from the N-terminus, the 206-residue chain is MPTVEVFNKEGKKVEDIELSEKVFGAKISESALHQVVVAQLANKRQGTQSAKTRTEVSGGGIKPWRQKGTGRARQGSIRAPQWIHGGVVFAPKPRDYRISIPKSMRRTAMLSALTSKVNDKEMIVLDELKIDAPKTKEIVKMLNAFEAKKALIVVAESDQNVYKSVRNIQGAAVIPANNLNVYDILKYDKFIVTKEAVSKIEEVYA.

The tract at residues Arg45–Gly76 is disordered.

The protein belongs to the universal ribosomal protein uL4 family. As to quaternary structure, part of the 50S ribosomal subunit.

Functionally, one of the primary rRNA binding proteins, this protein initially binds near the 5'-end of the 23S rRNA. It is important during the early stages of 50S assembly. It makes multiple contacts with different domains of the 23S rRNA in the assembled 50S subunit and ribosome. Forms part of the polypeptide exit tunnel. The polypeptide is Large ribosomal subunit protein uL4 (Clostridium acetobutylicum (strain ATCC 824 / DSM 792 / JCM 1419 / IAM 19013 / LMG 5710 / NBRC 13948 / NRRL B-527 / VKM B-1787 / 2291 / W)).